We begin with the raw amino-acid sequence, 327 residues long: Putative hydroxymethylpyrimidine/phosphomethylpyrimidine kinase C18B5.05c (327 aa).

Position 54 (glutamine 54) interacts with 4-amino-5-hydroxymethyl-2-methylpyrimidine.

This sequence belongs to the ThiD family.

Its subcellular location is the cytoplasm. It is found in the nucleus. It catalyses the reaction 4-amino-5-hydroxymethyl-2-methylpyrimidine + ATP = 4-amino-2-methyl-5-(phosphooxymethyl)pyrimidine + ADP + H(+). It carries out the reaction 4-amino-2-methyl-5-(phosphooxymethyl)pyrimidine + ATP = 4-amino-2-methyl-5-(diphosphooxymethyl)pyrimidine + ADP. It functions in the pathway cofactor biosynthesis; thiamine diphosphate biosynthesis; 4-amino-2-methyl-5-diphosphomethylpyrimidine from 5-amino-1-(5-phospho-D-ribosyl)imidazole: step 2/3. The protein operates within cofactor biosynthesis; thiamine diphosphate biosynthesis; 4-amino-2-methyl-5-diphosphomethylpyrimidine from 5-amino-1-(5-phospho-D-ribosyl)imidazole: step 3/3. Functionally, catalyzes the phosphorylation of hydroxymethylpyrimidine phosphate (HMP-P) to HMP-PP, and of HMP to HMP-P. The protein is Putative hydroxymethylpyrimidine/phosphomethylpyrimidine kinase C18B5.05c of Schizosaccharomyces pombe (strain 972 / ATCC 24843) (Fission yeast).